The following is a 361-amino-acid chain: DNA double-strand break repair protein Mre11 (361 aa).

Mn(2+)-binding residues include aspartate 7, histidine 9, aspartate 48, and asparagine 83. The Proton donor role is filled by histidine 84. Positions 176, 204, and 206 each coordinate Mn(2+).

It belongs to the MRE11/RAD32 family. As to quaternary structure, homodimer. Forms a heterotetramer composed of two Mre11 subunits and two Rad50 subunits. It depends on Mn(2+) as a cofactor.

With respect to regulation, nuclease activity is regulated by Rad50. In terms of biological role, part of the Rad50/Mre11 complex, which is involved in the early steps of DNA double-strand break (DSB) repair. The complex may facilitate opening of the processed DNA ends to aid in the recruitment of HerA and NurA. Mre11 binds to DSB ends and has both double-stranded 3'-5' exonuclease activity and single-stranded endonuclease activity. The polypeptide is DNA double-strand break repair protein Mre11 (Nanoarchaeum equitans (strain Kin4-M)).